The sequence spans 545 residues: Degenerin-like protein asic-2 (545 aa).

The Cytoplasmic portion of the chain corresponds to 1–34; that stretch reads MRGGGFVQIFKDFSNWSTVAVVPHVANANNKISR. A helical membrane pass occupies residues 35-55; that stretch reads IFWIAIFLFVLGMFAYELYIL. Topologically, residues 56 to 457 are extracellular; that stretch reads IAKFFSYPAT…NVINDLGGQA (402 aa). A disulfide bridge links cysteine 83 with cysteine 191. A glycan (N-linked (GlcNAc...) asparagine) is linked at asparagine 201. 5 cysteine pairs are disulfide-bonded: cysteine 284-cysteine 370, cysteine 305-cysteine 366, cysteine 309-cysteine 364, cysteine 318-cysteine 343, and cysteine 320-cysteine 334. N-linked (GlcNAc...) asparagine glycosylation is present at asparagine 350. The helical transmembrane segment at 458 to 478 threads the bilayer; that stretch reads GLWLGLSVISVVEMTGLMLVM. A GAS motif; ion selectivity filter motif is present at residues 462 to 464; it reads GLS. Over 479–545 the chain is Cytoplasmic; that stretch reads GAFCVTGGAI…NKGDEEKKKK (67 aa). Composition is skewed to basic and acidic residues over residues 514-523 and 534-545; these read DHLEKKHGEM and IENKGDEEKKKK. Residues 514–545 are disordered; it reads DHLEKKHGEMESGSDGEVDDIENKGDEEKKKK.

The protein belongs to the amiloride-sensitive sodium channel (TC 1.A.6) family. As to quaternary structure, can form homotrimers. Heterotrimer; forms functional heterotrimers producing channel with different properties.

It is found in the cell membrane. It carries out the reaction Na(+)(in) = Na(+)(out). With respect to regulation, inhibited by the diuretic drug amiloride. Its function is as follows. Could form pH-gated heterotrimeric sodium channels that act as postsynaptic excitatory sensors in the nervous system, generating rapid, transient inward currents that fully desensitize upon extracellular acidification. In Caenorhabditis elegans, this protein is Degenerin-like protein asic-2 (asic-2).